The chain runs to 294 residues: Shell matrix protein (294 aa).

In terms of tissue distribution, component of the organic matrix of calcified shell layers like nacre and prisms.

It localises to the secreted. In Mytilus californianus (California mussel), this protein is Shell matrix protein.